Consider the following 384-residue polypeptide: Chaperone protein DnaJ (384 aa).

Residues 5–70 (DFYQVLGVSK…QKRQMYDQYG (66 aa)) enclose the J domain. A CR-type zinc finger spans residues 138–216 (GKTVELEIPT…CHGHGRKEET (79 aa)). C151, C154, C168, C171, C190, C193, C204, and C207 together coordinate Zn(2+). CXXCXGXG motif repeat units follow at residues 151–158 (CRDCNGSG), 168–175 (CGHCHGSG), 190–197 (CPQCRGTG), and 204–211 (CRTCHGHG).

It belongs to the DnaJ family. As to quaternary structure, homodimer. Zn(2+) serves as cofactor.

It localises to the cytoplasm. Its function is as follows. Participates actively in the response to hyperosmotic and heat shock by preventing the aggregation of stress-denatured proteins and by disaggregating proteins, also in an autonomous, DnaK-independent fashion. Unfolded proteins bind initially to DnaJ; upon interaction with the DnaJ-bound protein, DnaK hydrolyzes its bound ATP, resulting in the formation of a stable complex. GrpE releases ADP from DnaK; ATP binding to DnaK triggers the release of the substrate protein, thus completing the reaction cycle. Several rounds of ATP-dependent interactions between DnaJ, DnaK and GrpE are required for fully efficient folding. Also involved, together with DnaK and GrpE, in the DNA replication of plasmids through activation of initiation proteins. The sequence is that of Chaperone protein DnaJ from Idiomarina loihiensis (strain ATCC BAA-735 / DSM 15497 / L2-TR).